The following is a 297-amino-acid chain: Protoheme IX farnesyltransferase (297 aa).

The next 8 membrane-spanning stretches (helical) occupy residues 15–35 (VVAL…PAPY), 39–59 (GLLV…AAVF), 91–111 (VWGV…VNII), 112–132 (TVVL…LYLK), 139–159 (IVIG…AVSG), 166–186 (ACLL…ALAI), 220–240 (LLLV…YLVI), and 265–285 (AWST…ALLF).

It belongs to the UbiA prenyltransferase family. Protoheme IX farnesyltransferase subfamily.

It localises to the cell inner membrane. The catalysed reaction is heme b + (2E,6E)-farnesyl diphosphate + H2O = Fe(II)-heme o + diphosphate. It participates in porphyrin-containing compound metabolism; heme O biosynthesis; heme O from protoheme: step 1/1. Converts heme B (protoheme IX) to heme O by substitution of the vinyl group on carbon 2 of heme B porphyrin ring with a hydroxyethyl farnesyl side group. This is Protoheme IX farnesyltransferase from Vesicomyosocius okutanii subsp. Calyptogena okutanii (strain HA).